A 375-amino-acid chain; its full sequence is Nucleosome assembly protein 1-like 4 (375 aa).

The segment at 1–31 (MADHSFSDGVPSDSVEAAKNASNTEKLTDQV) is disordered. An N-acetylalanine modification is found at Ala2. Phosphoserine occurs at positions 5, 7, and 12. Positions 20 to 31 (NASNTEKLTDQV) are enriched in polar residues. Thr51 is modified (phosphothreonine). Phosphoserine occurs at positions 53 and 54. Phosphothreonine is present on Thr58. Residue Lys105 is modified to N6-acetyllysine. The segment at 116–137 (PTDAESEWHSENEEEEKLAGDM) is disordered. Basic and acidic residues predominate over residues 121–137 (SEWHSENEEEEKLAGDM). Ser125 bears the Phosphoserine mark. Residue Lys146 is modified to N6-acetyllysine. Positions 265–271 (IKKKQKH) match the Nuclear localization signal motif. At Ser304 the chain carries Phosphoserine. Residues 339–375 (AIEDDDNFEEGEEGEEEELEGDEEGEDEDDAEINPKV) are disordered.

This sequence belongs to the nucleosome assembly protein (NAP) family. As to quaternary structure, interacts with core (H2A, CD2APH2B, H3, H4) and linker (H1) histones. (Microbial infection) Interacts with Chikungunya virus non-structural protein 3 (via C-terminus). Phosphorylated at the G0/G1 boundary but it is not phosphorylated in S-phase. Phosphorylated protein remains in the cytoplasm in a complex with histones during the G0/G1 transition, whereas dephosphorylation triggers its transport into the nucleus at the G1/S-boundary. In terms of processing, polyglutamylated by TTLL4, a modification that occurs exclusively on glutamate residues and results in polyglutamate chains on the gamma-carboxyl group. Some residues may also be monoglycylated but not polyglycylated due to the absence of functional TTLL10 in human. Ubiquitous. Biallelically expressed in fetal and adult tissues. Highest levels in testis.

Its subcellular location is the nucleus. It is found in the cytoplasm. In terms of biological role, acts as a histone chaperone in nucleosome assembly. This is Nucleosome assembly protein 1-like 4 from Homo sapiens (Human).